A 465-amino-acid chain; its full sequence is Tyrosine 3-monooxygenase (465 aa).

Positions 294, 299, and 339 each coordinate Fe cation.

It belongs to the biopterin-dependent aromatic amino acid hydroxylase family. Fe(2+) is required as a cofactor.

It is found in the cytoplasm. It localises to the perinuclear region. It catalyses the reaction (6R)-L-erythro-5,6,7,8-tetrahydrobiopterin + L-tyrosine + O2 = (4aS,6R)-4a-hydroxy-L-erythro-5,6,7,8-tetrahydrobiopterin + L-dopa. It participates in catecholamine biosynthesis; dopamine biosynthesis; dopamine from L-tyrosine: step 1/2. This chain is Tyrosine 3-monooxygenase (TH), found in Schistosoma mansoni (Blood fluke).